We begin with the raw amino-acid sequence, 533 residues long: Heterogeneous nuclear ribonucleoprotein Q (533 aa).

Residue Ala-2 is modified to N-acetylalanine. The residue at position 69 (Ser-69) is a Phosphoserine. RRM domains follow at residues Thr-72–Ala-151, Asn-153–Pro-235, and Lys-248–Pro-318. Lys-78 participates in a covalent cross-link: Glycyl lysine isopeptide (Lys-Gly) (interchain with G-Cter in SUMO2). Lys-131 is subject to N6-acetyllysine. Lys-273 is subject to N6-acetyllysine. Tyr-283 is subject to Phosphotyrosine. Residues Asn-310–Val-471 are interaction with APOBEC1. The residue at position 354 (Arg-354) is an Asymmetric dimethylarginine; by PRMT1; alternate. Position 354 is an omega-N-methylarginine; by PRMT1; alternate (Arg-354). Tandem repeats lie at residues Arg-358–Gly-360, Arg-361–Gly-363, Tyr-370–Glu-374, Tyr-379–Tyr-382, Arg-388–Gly-390, and Tyr-395–Tyr-398. The tract at residues Arg-358–Gly-469 is 8 X 3 AA repeats of R-G-G. The 3 X 4 AA repeats of Y-Y-G-Y stretch occupies residues Tyr-370 to Tyr-398. The residue at position 406 (Arg-406) is an Omega-N-methylarginine; by PRMT1. Residues Gly-407–Lys-533 form a disordered region. A 1-4 repeat occupies Arg-408–Gly-410. A compositionally biased stretch (low complexity) spans Arg-414–Gly-432. Asymmetric dimethylarginine; by PRMT1 is present on Arg-420. Arg-428 bears the Asymmetric dimethylarginine; by PRMT1; alternate mark. Position 428 is an omega-N-methylarginine; by PRMT1; alternate (Arg-428). The interaction with SMN stretch occupies residues Arg-428 to Gly-459. Asymmetric dimethylarginine; alternate is present on Arg-436. Residue Arg-436 is modified to Omega-N-methylarginine; alternate. A 1-5 repeat occupies Arg-436–Gly-438. Asymmetric dimethylarginine; by PRMT1; alternate is present on residues Arg-446 and Arg-449. Omega-N-methylarginine; by PRMT1; alternate occurs at positions 446 and 449. 3 tandem repeats follow at residues Arg-449–Gly-451, Arg-464–Gly-466, and Arg-467–Gly-469. The span at Val-460 to Gly-472 shows a compositional bias: gly residues. Residues Lys-474–Arg-488 carry the Bipartite nuclear localization signal motif. The span at Thr-490 to Leu-505 shows a compositional bias: polar residues. A Phosphoserine modification is found at Ser-497. Lys-517 is covalently cross-linked (Glycyl lysine isopeptide (Lys-Gly) (interchain with G-Cter in SUMO2)).

Identified in a histone pre-mRNA complex, at least composed of ERI1, LSM11, SLBP, SNRPB, SYNCRIP and YBX1. Identified in the spliceosome C complex. Component of the coding region determinant (CRD)-mediated complex, composed of DHX9, HNRNPU, IGF2BP1, SYNCRIP and YBX1. Identified in a mRNP complex, at least composed of DHX9, DDX3X, ELAVL1, HNRNPU, IGF2BP1, ILF3, PABPC1, PCBP2, PTBP2, STAU1, STAU2, SYNCRIP and YBX1. Identified in a mRNP granule complex, at least composed of ACTB, ACTN4, DHX9, ERG, HNRNPA1, HNRNPA2B1, HNRNPAB, HNRNPD, HNRNPL, HNRNPR, HNRNPU, HSPA1, HSPA8, IGF2BP1, ILF2, ILF3, NCBP1, NCL, PABPC1, PABPC4, PABPN1, RPLP0, RPS3, RPS3A, RPS4X, RPS8, RPS9, SYNCRIP, YBX1 and untranslated mRNAs. Component of the APOB mRNA editosome. Interacts with APOBEC1 and A1CF. Part of a complex associated with the FOS mCRD domain and consisting of PABPC1, PAIP1, CSDE1/UNR, HNRPD and SYNCRIP. Interacts with HNRPR, SMN, POLR2A hyperphosphorylated C-terminal domain, minute virus of mice (MVM) NS1 protein and through its C-terminal domain with SYT7, SYT8 and SYT9. The non-phosphorylated and phosphorylated forms are colocalized with PAIP1 in polysomes. Interacts with GTPBP1. Interacts with HABP4. Post-translationally, phosphorylated on tyrosine. The membrane-bound form found in microsomes is phosphorylated in vitro by insulin receptor tyrosine kinase (INSR). Phosphorylation is inhibited upon binding to RNA, whereas the cytoplasmic form is poorly phosphorylated.

The protein localises to the nucleus. It is found in the nucleoplasm. It localises to the cytoplasm. The protein resides in the microsome. In terms of biological role, heterogenous nuclear ribonucleoprotein (hnRNP) implicated in mRNA processing mechanisms. Component of the CRD-mediated complex that promotes MYC mRNA stability. Is associated in vitro with pre-mRNA, splicing intermediates and mature mRNA protein complexes. Binds to apoB mRNA AU-rich sequences. Part of the APOB mRNA editosome complex and may modulate the postranscriptional C to U RNA-editing of the APOB mRNA through either by binding to A1CF (APOBEC1 complementation factor), to APOBEC1 or to RNA itself. May be involved in translationally coupled mRNA turnover. Implicated with other RNA-binding proteins in the cytoplasmic deadenylation/translational and decay interplay of the FOS mRNA mediated by the major coding-region determinant of instability (mCRD) domain. Interacts in vitro preferentially with poly(A) and poly(U) RNA sequences. May be involved in cytoplasmic vesicle-based mRNA transport through interaction with synaptotagmins. The protein is Heterogeneous nuclear ribonucleoprotein Q (Syncrip) of Rattus norvegicus (Rat).